The primary structure comprises 201 residues: Small ribosomal subunit protein uS4c (201 aa).

An S4 RNA-binding domain is found at 91 to 151 (MRLDNIIFQL…TKNPEELRTI (61 aa)).

The protein belongs to the universal ribosomal protein uS4 family. In terms of assembly, part of the 30S ribosomal subunit. Contacts protein S5. The interaction surface between S4 and S5 is involved in control of translational fidelity.

The protein localises to the plastid. Its subcellular location is the chloroplast. In terms of biological role, one of the primary rRNA binding proteins, it binds directly to 16S rRNA where it nucleates assembly of the body of the 30S subunit. Functionally, with S5 and S12 plays an important role in translational accuracy. The protein is Small ribosomal subunit protein uS4c (rps4) of Welwitschia mirabilis (Tree tumbo).